The chain runs to 273 residues: MSLQNIIETAFENRADITPTTVTPEVKEAVLETIRQLDSGKLRVAERLGVGEWKVNEWAKKAVLLSFRIQDNEVLNDGVNKYFDKVPTKFADWSEDEFKNAGFRAVPGAVARRGSFVAKNVVLMPSYVNIGAYVDEGAMVDTWATVGSCAQIGKNVHLSGGVGIGGVLEPLQAAPTIIEDNCFIGARSEIVEGVIVEEGSVISMGVFIGQSTKIFDRTTGEIYQGRVPTGSVVVSGSMPSKDGSHSLYCAVIVKRVDAQTRAKTSVNELLRGI.

Arginine 104 and aspartate 141 together coordinate substrate.

Belongs to the transferase hexapeptide repeat family. Homotrimer.

The protein resides in the cytoplasm. The enzyme catalyses (S)-2,3,4,5-tetrahydrodipicolinate + succinyl-CoA + H2O = (S)-2-succinylamino-6-oxoheptanedioate + CoA. The protein operates within amino-acid biosynthesis; L-lysine biosynthesis via DAP pathway; LL-2,6-diaminopimelate from (S)-tetrahydrodipicolinate (succinylase route): step 1/3. The sequence is that of 2,3,4,5-tetrahydropyridine-2,6-dicarboxylate N-succinyltransferase from Neisseria meningitidis serogroup C (strain 053442).